Consider the following 321-residue polypeptide: MGELPLDINIQEPRWDQSTFLGRARHFFTVTDPRNLLLSGAQLEASRNIVQNYRAGVVTPGITEDQLWRAKYVYDSAFHPDTGEKVVLIGRMSAQVPMNMTITGCMLTFYRKTPTVVFWQWVNQSFNAIVNYSNRSGDTPITVRQLGTAYVSATTGAVATALGLKSLTKHLPPLVGRFVPFAAVAAANCINIPLMRQRELQVGIPVADEAGQRLGYSVTAAKQGIFQVVISRICMAIPAMAIPPLIMDTLEKKDFLKRRPWLGAPLQVGLVGFCLVFATPLCCALFPQKSSIHISNLEPELRAQIHEQNPSVEVVYYNKGL.

Position 1 is an N-acetylmethionine (Met-1). A run of 4 helical transmembrane segments spans residues 146–164 (LGTA…ALGL), 174–194 (LVGR…NIPL), 226–246 (FQVV…PPLI), and 266–286 (LQVG…CALF).

The protein belongs to the sideroflexin family.

It localises to the mitochondrion membrane. The catalysed reaction is L-serine(in) = L-serine(out). Its function is as follows. Mitochondrial serine transporter that mediates transport of serine into mitochondria, an important step of the one-carbon metabolism pathway. Mitochondrial serine is converted to glycine and formate, which then exits to the cytosol where it is used to generate the charged folates that serve as one-carbon donors. The chain is Sideroflexin-3 from Homo sapiens (Human).